The following is a 362-amino-acid chain: mRNA decay activator protein ZFP36L2 (362 aa).

Residues 100 to 109 show a composition bias toward basic and acidic residues; that stretch reads SFSENGERSQ. Positions 100–126 are disordered; sequence SFSENGERSQHLLHLQQQQQQKAGAQV. Over residues 111–120 the composition is skewed to low complexity; the sequence is LLHLQQQQQQ. The short motif at 130–135 is the RNA-binding element; that stretch reads RYKTEL. 2 consecutive C3H1-type zinc fingers follow at residues 130 to 158 and 168 to 196; these read RYKT…HGFH and KYKT…HNAE. Residues 147-188 are RNA-binding; sequence YGEKCQFAHGFHELRSLTRHPKYKTELCRTFHTIGFCPYGPR. 2 disordered regions span residues 225 to 244 and 306 to 362; these read DSPL…SSSS and SESP…ISDD. Low complexity predominate over residues 327–346; sequence YLSGSLSSGSLSGSDSPTLD.

In terms of processing, phosphorylated.

It localises to the nucleus. The protein localises to the cytoplasm. Functionally, zinc-finger RNA-binding protein that destabilizes several cytoplasmic AU-rich element (ARE)-containing mRNA transcripts by promoting their poly(A) tail removal or deadenylation, and hence provide a mechanism for attenuating protein synthesis. Acts as a 3'-untranslated region (UTR) ARE mRNA-binding adapter protein to communicate signaling events to the mRNA decay machinery. Functions by recruiting the CCR4-NOT deadenylase complex and probably other components of the cytoplasmic RNA decay machinery to the bound ARE-containing mRNAs, and hence promotes ARE-mediated mRNA deadenylation and decay processes. Binds to 3'-UTR ARE of numerous mRNAs. Also induces the degradation of ARE-containing mRNAs even in absence of poly(A) tail. Required for tubulogenesis during pronephros development. The sequence is that of mRNA decay activator protein ZFP36L2 (zfp36l2) from Xenopus tropicalis (Western clawed frog).